The primary structure comprises 306 residues: D-glucosamine-6-phosphate 4-epimerase (306 aa).

The SIS domain occupies 19–153 (DIPGVKTAEK…TGSNYRVQDL (135 aa)). The active-site Proton acceptor is Glu-200. Residue His-216 is the Proton donor of the active site. The active-site Proton acceptor is the Arg-296.

The protein belongs to the PGI/PMI family.

The catalysed reaction is D-glucosamine 6-phosphate = D-galactosamine 6-phosphate. Functionally, involved in the synthesis of UDP-N-acetylgalactosamine (UDP-GalNAc). Catalyzes the conversion of glucosamine-6-phosphate (GlcN-6-P) to galactosamine-6-phosphate (GalN-6-P). The sequence is that of D-glucosamine-6-phosphate 4-epimerase from Sulfolobus acidocaldarius (strain ATCC 33909 / DSM 639 / JCM 8929 / NBRC 15157 / NCIMB 11770).